The chain runs to 699 residues: NAD(P)H-quinone oxidoreductase subunit 5, chloroplastic (699 aa).

The next 15 helical transmembrane spans lie at 1–21 (WIIP…LLLF), 32–52 (WAFP…NLSI), 81–101 (IDPL…TVLI), 117–137 (FAYM…SNLI), 139–159 (IYIF…FWFT), 177–197 (GDFG…SFEF), 216–236 (LFVT…SAQF), 250–270 (TPIS…FLVA), 272–292 (LLPL…IGII), 319–339 (LGYM…FHLI), 346–366 (ALLF…VGYS), 388–408 (ISFL…CFWS), 417–437 (WLYS…TAFY), 539–559 (LFPL…GISF), and 598–618 (IFSV…YKPI).

This sequence belongs to the complex I subunit 5 family. As to quaternary structure, NDH is composed of at least 16 different subunits, 5 of which are encoded in the nucleus.

The protein resides in the plastid. It localises to the chloroplast thylakoid membrane. It catalyses the reaction a plastoquinone + NADH + (n+1) H(+)(in) = a plastoquinol + NAD(+) + n H(+)(out). It carries out the reaction a plastoquinone + NADPH + (n+1) H(+)(in) = a plastoquinol + NADP(+) + n H(+)(out). NDH shuttles electrons from NAD(P)H:plastoquinone, via FMN and iron-sulfur (Fe-S) centers, to quinones in the photosynthetic chain and possibly in a chloroplast respiratory chain. The immediate electron acceptor for the enzyme in this species is believed to be plastoquinone. Couples the redox reaction to proton translocation, and thus conserves the redox energy in a proton gradient. The protein is NAD(P)H-quinone oxidoreductase subunit 5, chloroplastic (ndhF) of Digitalis grandiflora (Yellow foxglove).